The chain runs to 195 residues: dTTP/UTP pyrophosphatase (195 aa).

Asp77 functions as the Proton acceptor in the catalytic mechanism.

This sequence belongs to the Maf family. YhdE subfamily. A divalent metal cation serves as cofactor.

It localises to the cytoplasm. It carries out the reaction dTTP + H2O = dTMP + diphosphate + H(+). It catalyses the reaction UTP + H2O = UMP + diphosphate + H(+). Its function is as follows. Nucleoside triphosphate pyrophosphatase that hydrolyzes dTTP and UTP. May have a dual role in cell division arrest and in preventing the incorporation of modified nucleotides into cellular nucleic acids. The sequence is that of dTTP/UTP pyrophosphatase from Flavobacterium psychrophilum (strain ATCC 49511 / DSM 21280 / CIP 103535 / JIP02/86).